We begin with the raw amino-acid sequence, 1657 residues long: Putative serine/threonine-protein kinase/receptor R826 (1657 aa).

Positions Met-1–Cys-23 are cleaved as a signal peptide. Residues Asn-153, Asn-178, Asn-238, Asn-255, Asn-352, Asn-454, Asn-476, Asn-494, and Asn-596 are each glycosylated (N-linked (GlcNAc...) asparagine; by host). Residues Ile-742–Val-762 traverse the membrane as a helical segment. The Protein kinase 1 domain maps to Leu-786–Met-1049. ATP-binding positions include Leu-792–Val-800 and Lys-813. The active-site Proton acceptor is Asp-909. Residues Val-1089 to Asn-1115 form a disordered region. The region spanning Val-1134–Thr-1277 is the Guanylate cyclase domain. Residues Ile-1399–Phe-1651 form the Protein kinase 2 domain. Residues Ile-1405 to Val-1413 and Lys-1426 each bind ATP. Asp-1522 serves as the catalytic Proton acceptor.

The protein localises to the membrane. It catalyses the reaction L-seryl-[protein] + ATP = O-phospho-L-seryl-[protein] + ADP + H(+). The catalysed reaction is L-threonyl-[protein] + ATP = O-phospho-L-threonyl-[protein] + ADP + H(+). The polypeptide is Putative serine/threonine-protein kinase/receptor R826 (Acanthamoeba polyphaga mimivirus (APMV)).